The following is a 164-amino-acid chain: SsrA-binding protein (164 aa).

The protein belongs to the SmpB family.

The protein resides in the cytoplasm. Required for rescue of stalled ribosomes mediated by trans-translation. Binds to transfer-messenger RNA (tmRNA), required for stable association of tmRNA with ribosomes. tmRNA and SmpB together mimic tRNA shape, replacing the anticodon stem-loop with SmpB. tmRNA is encoded by the ssrA gene; the 2 termini fold to resemble tRNA(Ala) and it encodes a 'tag peptide', a short internal open reading frame. During trans-translation Ala-aminoacylated tmRNA acts like a tRNA, entering the A-site of stalled ribosomes, displacing the stalled mRNA. The ribosome then switches to translate the ORF on the tmRNA; the nascent peptide is terminated with the 'tag peptide' encoded by the tmRNA and targeted for degradation. The ribosome is freed to recommence translation, which seems to be the essential function of trans-translation. This Shewanella sediminis (strain HAW-EB3) protein is SsrA-binding protein.